The primary structure comprises 65 residues: U15-hexatoxin-Mg1b (65 aa).

Post-translationally, contains 4 disulfide bonds. In terms of tissue distribution, expressed by the venom gland.

Its subcellular location is the secreted. Functionally, in vivo, intrathorax injection into crickets causes death. The sequence is that of U15-hexatoxin-Mg1b from Macrothele gigas (Japanese funnel web spider).